The chain runs to 180 residues: Large ribosomal subunit protein uL5 (180 aa).

It belongs to the universal ribosomal protein uL5 family. As to quaternary structure, part of the 50S ribosomal subunit; part of the 5S rRNA/L5/L18/L25 subcomplex. Contacts the 5S rRNA and the P site tRNA. Forms a bridge to the 30S subunit in the 70S ribosome.

Functionally, this is one of the proteins that bind and probably mediate the attachment of the 5S RNA into the large ribosomal subunit, where it forms part of the central protuberance. In the 70S ribosome it contacts protein S13 of the 30S subunit (bridge B1b), connecting the 2 subunits; this bridge is implicated in subunit movement. Contacts the P site tRNA; the 5S rRNA and some of its associated proteins might help stabilize positioning of ribosome-bound tRNAs. The protein is Large ribosomal subunit protein uL5 of Lacticaseibacillus casei (strain BL23) (Lactobacillus casei).